The sequence spans 110 residues: Large ribosomal subunit protein uL22 (110 aa).

This sequence belongs to the universal ribosomal protein uL22 family. Part of the 50S ribosomal subunit.

Its function is as follows. This protein binds specifically to 23S rRNA; its binding is stimulated by other ribosomal proteins, e.g. L4, L17, and L20. It is important during the early stages of 50S assembly. It makes multiple contacts with different domains of the 23S rRNA in the assembled 50S subunit and ribosome. Functionally, the globular domain of the protein is located near the polypeptide exit tunnel on the outside of the subunit, while an extended beta-hairpin is found that lines the wall of the exit tunnel in the center of the 70S ribosome. The protein is Large ribosomal subunit protein uL22 of Buchnera aphidicola subsp. Acyrthosiphon pisum (strain 5A).